We begin with the raw amino-acid sequence, 406 residues long: Vitamin D3 dihydroxylase (406 aa).

Residues 1–15 (MTDTATTPQTTDAPA) show a composition bias toward low complexity. The segment at 1–24 (MTDTATTPQTTDAPAFPSNRSCPY) is disordered. Calciol is bound at residue Thr-81. Heme is bound by residues His-103 and Arg-107. Residues Arg-193, Ser-236, and Ile-293 each contribute to the calciol site. Heme-binding residues include Arg-297, His-353, and Cys-355.

It belongs to the cytochrome P450 family. Heme serves as cofactor.

The protein resides in the cytoplasm. It carries out the reaction calciol + 2 reduced [2Fe-2S]-[ferredoxin] + O2 + 2 H(+) = calcidiol + 2 oxidized [2Fe-2S]-[ferredoxin] + H2O. The catalysed reaction is calcidiol + 2 reduced [2Fe-2S]-[ferredoxin] + O2 + 2 H(+) = calcitriol + 2 oxidized [2Fe-2S]-[ferredoxin] + H2O. In terms of biological role, involved in the metabolism of vitamin D3 (calciol) and of a number of sulfonylurea herbicides. Catalyzes the two-step hydroxylation (25- and 1-alpha-hydroxylation) of vitamin D3 (VD3) to yield its active form 1-alpha,25-dihydroxyvitamin D3 (calcitriol). The first step is the hydroxylation of the C-25 position of VD3 to produce 25-hydroxyvitamin D3 (calcidiol). The second reaction is the hydroxylation of the C1-alpha-position of calcidiol to produce calcitriol. It can also hydroxylate vitamin D2. This chain is Vitamin D3 dihydroxylase, found in Streptomyces griseolus.